The chain runs to 371 residues: Cytochrome b (371 aa).

The next 4 membrane-spanning stretches (helical) occupy residues 25 to 45 (FGSMLLACLALQVLTGFFLAV), 69 to 90 (WMMQNLHAIGASMFFICIYIHI), 105 to 125 (WMSGITLLITLMATAFFGYVL), and 170 to 190 (FFALHFILPFAIISMSSLHII). Positions 75 and 89 each coordinate heme b. Heme b-binding residues include His-174 and His-188. His-193 lines the a ubiquinone pocket. The next 4 membrane-spanning stretches (helical) occupy residues 218–238 (YKDLLFLTLMILFMLIIVSFF), 280–300 (LGGALALVMSIMILFIIPFTH), 312–332 (LSQLMFWTLVSTFITITWAAT), and 339–358 (YIIISQVTATLYFIFFISMP).

Belongs to the cytochrome b family. As to quaternary structure, the cytochrome bc1 complex contains 3 respiratory subunits (MT-CYB, CYC1 and UQCRFS1), 2 core proteins (UQCRC1 and UQCRC2) and probably 6 low-molecular weight proteins. The cofactor is heme b.

It is found in the mitochondrion inner membrane. Its function is as follows. Component of the ubiquinol-cytochrome c reductase complex (complex III or cytochrome b-c1 complex) that is part of the mitochondrial respiratory chain. The b-c1 complex mediates electron transfer from ubiquinol to cytochrome c. Contributes to the generation of a proton gradient across the mitochondrial membrane that is then used for ATP synthesis. The polypeptide is Cytochrome b (MT-CYB) (Python molurus (Indian python)).